A 527-amino-acid chain; its full sequence is Glucose transporter 1B/1C/1D/1F/2B (527 aa).

Positions 1–22 (MTERRDNVSHAPDAIEGPNDGA) are disordered. Residues 1-43 (MTERRDNVSHAPDAIEGPNDGAHAEDTSPGFFSLENLGVAQVQ) are Cytoplasmic-facing. The helical transmembrane segment at 44 to 64 (VVGGTLNGYVIGYVAVYLLLY) threads the bilayer. The Extracellular segment spans residues 65 to 118 (LTATECKFTTEGACGGRKIYGCKWSGTTCKFENPKCSEGSDPSDSCKNEVAYTS). The chain crosses the membrane as a helical span at residues 119-139 (VYSGIFACAMIVGSMVGSIIA). Residues 140 to 151 (GKCITTFGLKKS) lie on the Cytoplasmic side of the membrane. A helical transmembrane segment spans residues 152 to 172 (FIIVSITCTIACVVVQVAIEY). The Extracellular segment spans residues 173-175 (NNY). Residues 176 to 196 (YALCTGRVLIGLGVGILCSVF) form a helical membrane-spanning segment. Residues 197–213 (PMYVNENAHPKLCKMDG) are Cytoplasmic-facing. A helical membrane pass occupies residues 214–234 (VLFQVFTTLGIMLAAMLGLIL). At 235-249 (DKTGASKEEANMAGR) the chain is on the extracellular side. A helical membrane pass occupies residues 250–270 (LHVFSAVPLGLSVAMFLVGMF). Topologically, residues 271–299 (LRESTATFAQDDDGKADGGMDPNEYGWGQ) are cytoplasmic. Residues 300-320 (MLWPLFMGAVTAGTLQLTGIN) form a helical membrane-spanning segment. At 321–338 (AVMNYAPKITENLGMDPS) the chain is on the extracellular side. A helical transmembrane segment spans residues 339 to 359 (LGNFLVMAWNFVTSLVAIPLA). The Cytoplasmic portion of the chain corresponds to 360 to 372 (SRFTMRQMFITCS). Residues 373–393 (FVASCMCLFLCGIPVFPGVAG) form a helical membrane-spanning segment. Residues 394–403 (KEVKNGVATT) are Extracellular-facing. A helical membrane pass occupies residues 404–424 (GIALFIAAFEFGVGSCFFVLA). The Cytoplasmic portion of the chain corresponds to 425-436 (QDLFPPSFRPKG). The chain crosses the membrane as a helical span at residues 437–457 (GSFVVMMQFIFNILINLLYPI). Residues 458-475 (TTEAISGGATGNQDKGQA) lie on the Extracellular side of the membrane. The helical transmembrane segment at 476 to 496 (VAFILFGLIGLICSVLQFFYL) threads the bilayer. Over 497–527 (YPYDANQDHENDHGGEPVEQKTYPVEASPRN) the chain is Cytoplasmic. A compositionally biased stretch (basic and acidic residues) spans 506–515 (ENDHGGEPVE). Residues 506 to 527 (ENDHGGEPVEQKTYPVEASPRN) are disordered.

This sequence belongs to the major facilitator superfamily. Sugar transporter (TC 2.A.1.1) family.

It is found in the membrane. Functionally, facilitative glucose transporter. This chain is Glucose transporter 1B/1C/1D/1F/2B (THT1B), found in Trypanosoma brucei brucei.